A 211-amino-acid polypeptide reads, in one-letter code: Phosphoserine phosphatase 1 (211 aa).

The active-site Tele-phosphohistidine intermediate is the H9. H150 is a catalytic residue.

It belongs to the histidine phosphatase superfamily. Metal-independent phosphoserine phosphatase family. Homodimer. Can also form a heterodimer with PspB.

It catalyses the reaction O-phospho-L-serine + H2O = L-serine + phosphate. It carries out the reaction O-phospho-D-serine + H2O = D-serine + phosphate. It functions in the pathway amino-acid biosynthesis; L-serine biosynthesis; L-serine from 3-phospho-D-glycerate: step 3/3. With respect to regulation, activity is not inhibited by EDTA in vitro, nor enhanced by the addition of Mg(2+). Catalyzes the dephosphorylation of L-phosphoserine to serine and inorganic phosphate. Is poorly or not active toward D-phosphoserine, DL-phosphothreonine, 3-phosphoglycerate, para-nitrophenylphosphate, and fructose-6-phosphate. Does not display phosphoglycerate mutase activity. The protein is Phosphoserine phosphatase 1 (pspA) of Hydrogenobacter thermophilus (strain DSM 6534 / IAM 12695 / TK-6).